The sequence spans 440 residues: Glycerophosphocholine cholinephosphodiesterase ENPP6 (440 aa).

The first 22 residues, 1–22, serve as a signal peptide directing secretion; sequence MAVKLGTLLLALALGLAQPASA. The substrate site is built by D32, S71, and N92. Positions 32 and 71 each coordinate Zn(2+). S71 (nucleophile) is an active-site residue. The residue at position 71 (S71) is a Phosphoserine. Residues N100 and N118 are each glycosylated (N-linked (GlcNAc...) asparagine). A disulfide bond links C142 and C154. Position 193 (D193) interacts with substrate. The Zn(2+) site is built by D193, H197, D240, and H241. Position 241 (H241) interacts with substrate. The N-linked (GlcNAc...) asparagine glycan is linked to N341. H354 contacts substrate. H354 contributes to the Zn(2+) binding site. N-linked (GlcNAc...) asparagine glycosylation is present at N404. A418 is lipidated: GPI-anchor amidated alanine. A propeptide spans 419–440 (removed in mature form); that stretch reads GTTPPVQPSHCALALILLFLLA.

The protein belongs to the nucleotide pyrophosphatase/phosphodiesterase family. Homodimer; disulfide-linked. Homotetramer. Requires Zn(2+) as cofactor.

It is found in the cell membrane. It carries out the reaction sn-glycerol 3-phosphocholine + H2O = phosphocholine + glycerol + H(+). The enzyme catalyses a 1-acyl-sn-glycero-3-phosphocholine + H2O = a 1-acyl-sn-glycerol + phosphocholine + H(+). The catalysed reaction is a 1-O-alkyl-sn-glycero-3-phosphocholine + H2O = a 1-O-alkyl-sn-glycerol + phosphocholine + H(+). It catalyses the reaction 1-dodecanoyl-sn-glycero-3-phosphocholine + H2O = 1-dodecanoyl-sn-glycerol + phosphocholine + H(+). It carries out the reaction 1-hexadecanoyl-sn-glycero-3-phosphocholine + H2O = 1-hexadecanoyl-sn-glycerol + phosphocholine + H(+). The enzyme catalyses 1-(5Z,8Z,11Z,14Z-eicosatetraenoyl)-sn-glycero-3-phosphocholine + H2O = 1-(5Z,8Z,11Z,14Z-eicosatetraenoyl)-sn-glycerol + phosphocholine + H(+). The catalysed reaction is 1-tetradecanoyl-sn-glycero-3-phosphocholine + H2O = 1-tetradecanoyl-sn-glycerol + phosphocholine + H(+). It catalyses the reaction sphing-4-enine-phosphocholine + H2O = sphing-4-enine + phosphocholine + H(+). It carries out the reaction 1-(9Z-octadecenoyl)-sn-glycero-3-phosphocholine + H2O = 1-(9Z-octadecenoyl)-sn-glycerol + phosphocholine + H(+). The enzyme catalyses 1-(9Z,12Z)-octadecadienoyl-sn-glycero-3-phosphocholine + H2O = 1-(9Z,12Z-octadecadienoyl)-sn-glycerol + phosphocholine + H(+). The catalysed reaction is glycero-2-phosphocholine + H2O = phosphocholine + glycerol + H(+). With respect to regulation, inhibited by EDTA and EGTA in vitro. Its function is as follows. Choline-specific glycerophosphodiesterase that hydrolyzes glycerophosphocholine (GPC) and lysophosphatidylcholine (LPC) and contributes to supplying choline to the cells. Has a preference for LPC with short (12:0 and 14:0) or polyunsaturated (18:2 and 20:4) fatty acids. In vitro, hydrolyzes only choline-containing lysophospholipids, such as sphingosylphosphorylcholine (SPC), platelet-activating factor (PAF) and lysoPAF, but not other lysophospholipids. This Pongo abelii (Sumatran orangutan) protein is Glycerophosphocholine cholinephosphodiesterase ENPP6.